A 287-amino-acid chain; its full sequence is Orotidine 5'-phosphate decarboxylase (287 aa).

The active-site Proton donor is the K95.

Belongs to the OMP decarboxylase family. Type 2 subfamily.

It carries out the reaction orotidine 5'-phosphate + H(+) = UMP + CO2. The protein operates within pyrimidine metabolism; UMP biosynthesis via de novo pathway; UMP from orotate: step 2/2. The chain is Orotidine 5'-phosphate decarboxylase from Albidiferax ferrireducens (strain ATCC BAA-621 / DSM 15236 / T118) (Rhodoferax ferrireducens).